Here is a 139-residue protein sequence, read N- to C-terminus: Putative pre-16S rRNA nuclease (139 aa).

Belongs to the YqgF nuclease family.

The protein resides in the cytoplasm. Could be a nuclease involved in processing of the 5'-end of pre-16S rRNA. In Streptococcus equi subsp. equi (strain 4047), this protein is Putative pre-16S rRNA nuclease.